Here is a 769-residue protein sequence, read N- to C-terminus: Acetyl-coenzyme A carboxylase carboxyl transferase subunit alpha, chloroplastic (769 aa).

The N-terminal 54 residues, 1–54 (MASISHSSLALGGASSASASDYLRSSSNGVNGVPLKTLGRAVFTTIRRKDLAVT), are a transit peptide targeting the chloroplast. A CoA carboxyltransferase C-terminal domain is found at 132–385 (LENKYRQALK…KIAINENMNE (254 aa)). Coiled coils occupy residues 426 to 504 (EAVF…ASSE) and 631 to 744 (KQNQ…SDGS). Residues 718-769 (GLQEKQDELEKELAAARELAAEESDGSVKEDDDDDEDSSESGKSEMVNPSFA) form a disordered region. Residues 721–732 (EKQDELEKELAA) show a composition bias toward basic and acidic residues. Residues 738 to 756 (AEESDGSVKEDDDDDEDSS) show a composition bias toward acidic residues. S741 is subject to Phosphoserine.

The protein belongs to the AccA family. In terms of assembly, acetyl-CoA carboxylase is a heterohexamer composed of biotin carboxyl carrier protein, biotin carboxylase and two subunits each of ACCase subunit alpha and ACCase plastid-coded subunit beta (accD). In terms of tissue distribution, accumulates in fatty acids synthesizing tissues such as embryos, expanding leaves, flower buds, flowers, and developing siliques.

The protein localises to the plastid. The protein resides in the chloroplast inner membrane. It catalyses the reaction N(6)-carboxybiotinyl-L-lysyl-[protein] + acetyl-CoA = N(6)-biotinyl-L-lysyl-[protein] + malonyl-CoA. It participates in lipid metabolism; malonyl-CoA biosynthesis; malonyl-CoA from acetyl-CoA: step 1/1. Its function is as follows. Component of the acetyl coenzyme A carboxylase (ACC) complex. First, biotin carboxylase catalyzes the carboxylation of biotin on its carrier protein (BCCP) and then the CO(2) group is transferred by the carboxyltransferase to acetyl-CoA to form malonyl-CoA. In Arabidopsis thaliana (Mouse-ear cress), this protein is Acetyl-coenzyme A carboxylase carboxyl transferase subunit alpha, chloroplastic (CAC3).